The sequence spans 462 residues: Siroheme synthase (462 aa).

The precorrin-2 dehydrogenase /sirohydrochlorin ferrochelatase stretch occupies residues 1–201 (MQFLPLFHKL…GKPEEGERLL (201 aa)). Residues 22-23 (EV) and 43-44 (PE) each bind NAD(+). A Phosphoserine modification is found at S126. The uroporphyrinogen-III C-methyltransferase stretch occupies residues 214–462 (GEVYLVGAGP…AWFEGAQGSL (249 aa)). An S-adenosyl-L-methionine-binding site is contributed by P223. D246 serves as the catalytic Proton acceptor. K268 serves as the catalytic Proton donor. Residues 299–301 (GGD), I304, 329–330 (TA), M381, and G410 contribute to the S-adenosyl-L-methionine site.

This sequence in the N-terminal section; belongs to the precorrin-2 dehydrogenase / sirohydrochlorin ferrochelatase family. The protein in the C-terminal section; belongs to the precorrin methyltransferase family.

It carries out the reaction uroporphyrinogen III + 2 S-adenosyl-L-methionine = precorrin-2 + 2 S-adenosyl-L-homocysteine + H(+). The catalysed reaction is precorrin-2 + NAD(+) = sirohydrochlorin + NADH + 2 H(+). It catalyses the reaction siroheme + 2 H(+) = sirohydrochlorin + Fe(2+). The protein operates within cofactor biosynthesis; adenosylcobalamin biosynthesis; precorrin-2 from uroporphyrinogen III: step 1/1. Its pathway is cofactor biosynthesis; adenosylcobalamin biosynthesis; sirohydrochlorin from precorrin-2: step 1/1. It participates in porphyrin-containing compound metabolism; siroheme biosynthesis; precorrin-2 from uroporphyrinogen III: step 1/1. It functions in the pathway porphyrin-containing compound metabolism; siroheme biosynthesis; siroheme from sirohydrochlorin: step 1/1. The protein operates within porphyrin-containing compound metabolism; siroheme biosynthesis; sirohydrochlorin from precorrin-2: step 1/1. Its function is as follows. Multifunctional enzyme that catalyzes the SAM-dependent methylations of uroporphyrinogen III at position C-2 and C-7 to form precorrin-2 via precorrin-1. Then it catalyzes the NAD-dependent ring dehydrogenation of precorrin-2 to yield sirohydrochlorin. Finally, it catalyzes the ferrochelation of sirohydrochlorin to yield siroheme. The chain is Siroheme synthase from Ectopseudomonas mendocina (strain ymp) (Pseudomonas mendocina).